Consider the following 87-residue polypeptide: Small ribosomal subunit protein bS18 (87 aa).

Belongs to the bacterial ribosomal protein bS18 family. Part of the 30S ribosomal subunit. Forms a tight heterodimer with protein bS6.

Binds as a heterodimer with protein bS6 to the central domain of the 16S rRNA, where it helps stabilize the platform of the 30S subunit. The polypeptide is Small ribosomal subunit protein bS18 (Nitratidesulfovibrio vulgaris (strain ATCC 29579 / DSM 644 / CCUG 34227 / NCIMB 8303 / VKM B-1760 / Hildenborough) (Desulfovibrio vulgaris)).